Consider the following 516-residue polypeptide: Nucleolar complex protein 4 homolog (516 aa).

The next 3 membrane-spanning stretches (helical) occupy residues 297 to 317 (ACDL…ILIH), 347 to 367 (FFHL…LVAA), and 375 to 395 (LALT…CNLL).

This sequence belongs to the CBF/MAK21 family.

The protein localises to the nucleus membrane. It localises to the nucleus. Its subcellular location is the nucleolus. The chain is Nucleolar complex protein 4 homolog (NOC4L) from Homo sapiens (Human).